A 374-amino-acid polypeptide reads, in one-letter code: Outer membrane protein assembly factor BamC (374 aa).

The signal sequence occupies residues 1-22; the sequence is MSKFYKSGRVTTAVIVALSLSA. C23 carries the N-palmitoyl cysteine lipid modification. The S-diacylglycerol cysteine moiety is linked to residue C23.

This sequence belongs to the BamC family. Part of the Bam complex.

It localises to the cell outer membrane. Functionally, part of the outer membrane protein assembly complex, which is involved in assembly and insertion of beta-barrel proteins into the outer membrane. In Psychromonas ingrahamii (strain DSM 17664 / CCUG 51855 / 37), this protein is Outer membrane protein assembly factor BamC.